The primary structure comprises 580 residues: Putative Xaa-Pro dipeptidyl-peptidase (580 aa).

Catalysis depends on charge relay system residues serine 207, aspartate 319, and histidine 350.

This sequence belongs to the peptidase S15 family.

It catalyses the reaction Hydrolyzes Xaa-Pro-|- bonds to release unblocked, N-terminal dipeptides from substrates including Ala-Pro-|-p-nitroanilide and (sequentially) Tyr-Pro-|-Phe-Pro-|-Gly-Pro-|-Ile.. In Bacillus cereus (strain ATCC 14579 / DSM 31 / CCUG 7414 / JCM 2152 / NBRC 15305 / NCIMB 9373 / NCTC 2599 / NRRL B-3711), this protein is Putative Xaa-Pro dipeptidyl-peptidase.